Here is a 596-residue protein sequence, read N- to C-terminus: MSSNEAYHEPGAGGDGPGGSSGASGGGSQRSNQLHHQQILNETTYLKPAAKQAYFSDEKVLIPDDDSTNVGFSFRKLWAFTGPGFLMSIAYLDPGNIESDMQSGAAAKYKILWVLLWATVLGLLMQRLAARLGVVTGLHLAEMCYRQYKRLPRWILWIMIEIAIIGSDMQEVIGTAIAIYLLSNKVVPLWGGVLITIVDTFTFLFLDKYGLRKLEFLFGTLITIMAVSFGYEYIVSAPNQGEVLEGMFVPWCSNCNSNVLLQAVGVVGAVIMPHNLYLHSALVKSRDIDRRQTKKVSEANFYFFIEASVALFVSFIINLFVVAVFAHGMYGKTNNDVVEVCKDKSMYEDAKMSFVDNVNGTAIIDADLYKGGLFLGCTFGAVAMYIWGVGILAAGQSSTMTGTYAGQFSMEGFLNLQWPRWCRVLVTRCIAIIPTFCLAMFSKMEDLTSMNDILNAVMSLQLPFAAIPTIAFTSCAAIMGEFVNGLGNKIVSILLTIVVIGVNLYFVVVQVENMEIKGGLLALVCIFAILYILFNLYLVIHMAACMGNQRLMNSRWVQRFVLPSQNSFSIKNANSTYARIATSSDQEPEGLAGEDA.

A disordered region spans residues 1 to 34 (MSSNEAYHEPGAGGDGPGGSSGASGGGSQRSNQL). The segment covering 11–28 (GAGGDGPGGSSGASGGGS) has biased composition (gly residues). Asn-41 carries an N-linked (GlcNAc...) asparagine glycan. Helical transmembrane passes span 77-97 (LWAFTGPGFLMSIAYLDPGNI), 105-125 (AAAKYKILWVLLWATVLGLLM), 154-174 (WILWIMIEIAIIGSDMQEVIG), 186-206 (VVPLWGGVLITIVDTFTFLFL), 216-236 (FLFGTLITIMAVSFGYEYIVS), 263-283 (AVGVVGAVIMPHNLYLHSALV), and 309-329 (VALFVSFIINLFVVAVFAHGM). An N-linked (GlcNAc...) asparagine glycan is attached at Asn-359. 5 consecutive transmembrane segments (helical) span residues 373–393 (LFLGCTFGAVAMYIWGVGILA), 424–444 (VLVTRCIAIIPTFCLAMFSKM), 463–483 (PFAAIPTIAFTSCAAIMGEFV), 490–510 (IVSILLTIVVIGVNLYFVVVQ), and 520–540 (LLALVCIFAILYILFNLYLVI). Asn-574 carries N-linked (GlcNAc...) asparagine glycosylation.

The protein belongs to the NRAMP family. As to expression, expressed in macrophages and in the nervous system.

It localises to the membrane. In terms of biological role, putative transporter required for normal taste behavior. May be a nitrite/nitrate transporter. The protein is Protein Malvolio (Mvl) of Drosophila melanogaster (Fruit fly).